Reading from the N-terminus, the 587-residue chain is Glucosylglycerate phosphorylase (587 aa).

The active-site Nucleophile is aspartate 236.

It belongs to the glycosyl hydrolase 13 family. Glucosylglycerate phosphorylase subfamily.

The enzyme catalyses (2R)-2-O-(alpha-D-glucopyranosyl)-glycerate + phosphate = (R)-glycerate + alpha-D-glucose 1-phosphate. Its function is as follows. Catalyzes the reversible phosphorolysis of glucosylglycerate into alpha-D-glucose 1-phosphate (Glc1P) and D-glycerate. May be a regulator of intracellular levels of glucosylglycerate, a compatible solute that primarily protects organisms facing salt stress and very specific nutritional constraints. Cannot catalyze the phosphorolysis of sucrose. This chain is Glucosylglycerate phosphorylase, found in Spirochaeta thermophila (strain ATCC 700085 / DSM 6578 / Z-1203).